Here is a 901-residue protein sequence, read N- to C-terminus: Protein translocase subunit SecA (901 aa).

ATP contacts are provided by residues Q87, 105-109 (GEGKT), and D512. The segment at 859–901 (HQDDDSAAAAALAAQTGERKVGRNDPCPCGSGKKYKQCHGRLQ) is disordered. Zn(2+)-binding residues include C885, C887, C896, and H897. Residues 891–901 (KKYKQCHGRLQ) show a composition bias toward basic residues.

It belongs to the SecA family. Monomer and homodimer. Part of the essential Sec protein translocation apparatus which comprises SecA, SecYEG and auxiliary proteins SecDF-YajC and YidC. It depends on Zn(2+) as a cofactor.

Its subcellular location is the cell inner membrane. It localises to the cytoplasm. It catalyses the reaction ATP + H2O + cellular proteinSide 1 = ADP + phosphate + cellular proteinSide 2.. Functionally, part of the Sec protein translocase complex. Interacts with the SecYEG preprotein conducting channel. Has a central role in coupling the hydrolysis of ATP to the transfer of proteins into and across the cell membrane, serving both as a receptor for the preprotein-SecB complex and as an ATP-driven molecular motor driving the stepwise translocation of polypeptide chains across the membrane. The sequence is that of Protein translocase subunit SecA from Escherichia coli O9:H4 (strain HS).